The following is a 312-amino-acid chain: Putative S-adenosyl-L-methionine-dependent methyltransferase Mkms_0097 (312 aa).

S-adenosyl-L-methionine-binding positions include D134 and 163–164 (DL).

Belongs to the UPF0677 family.

In terms of biological role, exhibits S-adenosyl-L-methionine-dependent methyltransferase activity. In Mycobacterium sp. (strain KMS), this protein is Putative S-adenosyl-L-methionine-dependent methyltransferase Mkms_0097.